The chain runs to 463 residues: Cysteine--tRNA ligase (463 aa).

Cys-28 lines the Zn(2+) pocket. Residues 30 to 40 (ITPYDLCHIGH) carry the 'HIGH' region motif. Residues Cys-211, His-236, and Glu-240 each coordinate Zn(2+). Residues 268–272 (KMSKS) carry the 'KMSKS' region motif. Lys-271 contributes to the ATP binding site.

This sequence belongs to the class-I aminoacyl-tRNA synthetase family. Monomer. Zn(2+) serves as cofactor.

The protein resides in the cytoplasm. The enzyme catalyses tRNA(Cys) + L-cysteine + ATP = L-cysteinyl-tRNA(Cys) + AMP + diphosphate. This Wigglesworthia glossinidia brevipalpis protein is Cysteine--tRNA ligase.